A 285-amino-acid polypeptide reads, in one-letter code: RNA 5'-monophosphate methyltransferase (285 aa).

S-adenosyl-L-methionine-binding positions include Arg46, Asn77, Asp111, 136–137 (DI), and Met165. The Bin3-type SAM domain maps to 53 to 275 (ELLRQLFPPE…KHTHETQAIP (223 aa)).

The protein belongs to the methyltransferase superfamily. Interacts with DICER1; the interaction may be mediated by RNA.

Its subcellular location is the cytoplasm. It catalyses the reaction a 5'-end 5'-phospho-ribonucleoside-RNA + S-adenosyl-L-methionine = a 5'-end (5'-methylphospho)-ribonucleoside-RNA + S-adenosyl-L-homocysteine. The enzyme catalyses a 5'-end 5'-phospho-ribonucleoside-RNA + 2 S-adenosyl-L-methionine = a 5'-end (5'-bismethylphospho)-ribonucleoside-RNA + 2 S-adenosyl-L-homocysteine. Functionally, O-methyltransferase that specifically monomethylates 5'-monophosphate of cytoplasmic histidyl tRNA (tRNA(His)), acting as a capping enzyme by protecting tRNA(His) from cleavage by DICER1. Also able, with less efficiently, to methylate the 5' monophosphate of a subset of pre-miRNAs, acting as a negative regulator of miRNA processing. The 5' monophosphate of pre-miRNAs is recognized by DICER1 and is required for pre-miRNAs processing: methylation at this position reduces the processing of pre-miRNAs by DICER1. Was also reported to mediate dimethylation of pre-miR-145; however dimethylation cannot be reproduced by another group which observes a monomethylation of pre-miR-145. In Mus musculus (Mouse), this protein is RNA 5'-monophosphate methyltransferase.